The chain runs to 337 residues: Phosphate acyltransferase (337 aa).

It belongs to the PlsX family. Homodimer. Probably interacts with PlsY.

Its subcellular location is the cytoplasm. It catalyses the reaction a fatty acyl-[ACP] + phosphate = an acyl phosphate + holo-[ACP]. It participates in lipid metabolism; phospholipid metabolism. Catalyzes the reversible formation of acyl-phosphate (acyl-PO(4)) from acyl-[acyl-carrier-protein] (acyl-ACP). This enzyme utilizes acyl-ACP as fatty acyl donor, but not acyl-CoA. The chain is Phosphate acyltransferase from Moritella marina (Vibrio marinus).